The chain runs to 309 residues: Probable inactive poly [ADP-ribose] polymerase SRO5 (309 aa).

The region spanning 28 to 255 (CDSSSDRSFA…AFPVLIKALS (228 aa)) is the PARP catalytic domain. One can recognise an RST domain in the interval 238–309 (KRLRSPWMAF…IKACGHKVQH (72 aa)).

In terms of assembly, interacts with dehydration-responsive DREB2 proteins and a number of transcription factors belonging to several protein families.

The protein localises to the nucleus matrix. Functionally, probable inactive ADP-ribosyltransferase that may be involved in stress and developmental responses. The sequence is that of Probable inactive poly [ADP-ribose] polymerase SRO5 (SRO5) from Arabidopsis thaliana (Mouse-ear cress).